The sequence spans 126 residues: Large ribosomal subunit protein bL12 (126 aa).

Belongs to the bacterial ribosomal protein bL12 family. Homodimer. Part of the ribosomal stalk of the 50S ribosomal subunit. Forms a multimeric L10(L12)X complex, where L10 forms an elongated spine to which 2 to 4 L12 dimers bind in a sequential fashion. Binds GTP-bound translation factors.

Its function is as follows. Forms part of the ribosomal stalk which helps the ribosome interact with GTP-bound translation factors. Is thus essential for accurate translation. The polypeptide is Large ribosomal subunit protein bL12 (Francisella tularensis subsp. mediasiatica (strain FSC147)).